We begin with the raw amino-acid sequence, 86 residues long: Cell division topological specificity factor (86 aa).

The protein belongs to the MinE family.

In terms of biological role, prevents the cell division inhibition by proteins MinC and MinD at internal division sites while permitting inhibition at polar sites. This ensures cell division at the proper site by restricting the formation of a division septum at the midpoint of the long axis of the cell. This chain is Cell division topological specificity factor, found in Stenotrophomonas maltophilia (strain K279a).